The following is a 232-amino-acid chain: 2,3,4,5-tetrahydropyridine-2,6-dicarboxylate N-acetyltransferase (232 aa).

The protein belongs to the transferase hexapeptide repeat family. DapH subfamily.

The catalysed reaction is (S)-2,3,4,5-tetrahydrodipicolinate + acetyl-CoA + H2O = L-2-acetamido-6-oxoheptanedioate + CoA. It participates in amino-acid biosynthesis; L-lysine biosynthesis via DAP pathway; LL-2,6-diaminopimelate from (S)-tetrahydrodipicolinate (acetylase route): step 1/3. In terms of biological role, catalyzes the transfer of an acetyl group from acetyl-CoA to tetrahydrodipicolinate. The polypeptide is 2,3,4,5-tetrahydropyridine-2,6-dicarboxylate N-acetyltransferase (Streptococcus pneumoniae serotype 2 (strain D39 / NCTC 7466)).